The primary structure comprises 1003 residues: Glycine--tRNA ligase (1003 aa).

Positions 1–310 are glycine--tRNA ligase alpha subunit; it reads MSSQPLTLQD…VTAKQIPHIC (310 aa). Residues 311–1003 form a glycine--tRNA ligase beta subunit region; that stretch reads QDEDFLLEIG…CFGFYAWDAL (693 aa).

This sequence belongs to the class-II aminoacyl-tRNA synthetase family.

Its subcellular location is the cytoplasm. The enzyme catalyses tRNA(Gly) + glycine + ATP = glycyl-tRNA(Gly) + AMP + diphosphate. The chain is Glycine--tRNA ligase (glyQS) from Chlamydia muridarum (strain MoPn / Nigg).